The following is a 390-amino-acid chain: NADH-quinone oxidoreductase subunit D (390 aa).

It belongs to the complex I 49 kDa subunit family. In terms of assembly, NDH-1 is composed of 14 different subunits. Subunits NuoB, C, D, E, F, and G constitute the peripheral sector of the complex.

Its subcellular location is the cell membrane. It catalyses the reaction a quinone + NADH + 5 H(+)(in) = a quinol + NAD(+) + 4 H(+)(out). Its function is as follows. NDH-1 shuttles electrons from NADH, via FMN and iron-sulfur (Fe-S) centers, to quinones in the respiratory chain. The immediate electron acceptor for the enzyme in this species is believed to be ubiquinone. Couples the redox reaction to proton translocation (for every two electrons transferred, four hydrogen ions are translocated across the cytoplasmic membrane), and thus conserves the redox energy in a proton gradient. The chain is NADH-quinone oxidoreductase subunit D from Wolbachia pipientis subsp. Culex pipiens (strain wPip).